The sequence spans 234 residues: Orotidine 5'-phosphate decarboxylase (234 aa).

Residues D17, K38, 65–74, T122, R184, Q193, G213, and R214 each bind substrate; that span reads DLKLHDIPNT. Catalysis depends on K67, which acts as the Proton donor.

It belongs to the OMP decarboxylase family. Type 1 subfamily. In terms of assembly, homodimer.

The enzyme catalyses orotidine 5'-phosphate + H(+) = UMP + CO2. It functions in the pathway pyrimidine metabolism; UMP biosynthesis via de novo pathway; UMP from orotate: step 2/2. Catalyzes the decarboxylation of orotidine 5'-monophosphate (OMP) to uridine 5'-monophosphate (UMP). The chain is Orotidine 5'-phosphate decarboxylase from Thermosynechococcus vestitus (strain NIES-2133 / IAM M-273 / BP-1).